The chain runs to 266 residues: Small ribosomal subunit protein eS1 (266 aa).

The tract at residues 237–266 is disordered; the sequence is DGGSKTGEVGETGSKVDRPEGYEPPVQETV.

It belongs to the eukaryotic ribosomal protein eS1 family. In terms of assembly, component of the small ribosomal subunit. Mature ribosomes consist of a small (40S) and a large (60S) subunit. The 40S subunit contains about 33 different proteins and 1 molecule of RNA (18S). The 60S subunit contains about 49 different proteins and 3 molecules of RNA (28S, 5.8S and 5S).

The protein localises to the cytoplasm. The protein is Small ribosomal subunit protein eS1 of Lysiphlebus testaceipes (Greenbugs aphid parastoid).